The chain runs to 744 residues: NAD(P)H-quinone oxidoreductase subunit 5, chloroplastic (744 aa).

A run of 16 helical transmembrane segments spans residues 9 to 29, 40 to 60, 89 to 109, 125 to 145, 147 to 167, 185 to 205, 219 to 239, 258 to 278, 290 to 312, 327 to 347, 354 to 374, 396 to 416, 425 to 445, 549 to 569, 608 to 628, and 724 to 744; these read WIIP…LLLF, WAFQ…NLSI, IDPL…MVLI, FAYM…SNLI, IYIF…FWFT, GDFG…SFEF, NEVN…GAIA, TPIS…FLVA, IMNF…ALAQ, LGYM…FHLI, ALLF…VGYC, TSFL…CFWS, WLYS…TAFY, LFPI…GIPF, VFSV…YKPV, and YLFF…FLNF.

It belongs to the complex I subunit 5 family. In terms of assembly, NDH is composed of at least 16 different subunits, 5 of which are encoded in the nucleus.

The protein localises to the plastid. It is found in the chloroplast thylakoid membrane. It catalyses the reaction a plastoquinone + NADH + (n+1) H(+)(in) = a plastoquinol + NAD(+) + n H(+)(out). The enzyme catalyses a plastoquinone + NADPH + (n+1) H(+)(in) = a plastoquinol + NADP(+) + n H(+)(out). In terms of biological role, NDH shuttles electrons from NAD(P)H:plastoquinone, via FMN and iron-sulfur (Fe-S) centers, to quinones in the photosynthetic chain and possibly in a chloroplast respiratory chain. The immediate electron acceptor for the enzyme in this species is believed to be plastoquinone. Couples the redox reaction to proton translocation, and thus conserves the redox energy in a proton gradient. The protein is NAD(P)H-quinone oxidoreductase subunit 5, chloroplastic (ndhF) of Adenocaulon himalaicum (Trailplant).